Here is a 158-residue protein sequence, read N- to C-terminus: NAD(P)H-quinone oxidoreductase subunit J, chloroplastic (158 aa).

The protein belongs to the complex I 30 kDa subunit family. NDH is composed of at least 16 different subunits, 5 of which are encoded in the nucleus.

It localises to the plastid. It is found in the chloroplast thylakoid membrane. The catalysed reaction is a plastoquinone + NADH + (n+1) H(+)(in) = a plastoquinol + NAD(+) + n H(+)(out). It carries out the reaction a plastoquinone + NADPH + (n+1) H(+)(in) = a plastoquinol + NADP(+) + n H(+)(out). NDH shuttles electrons from NAD(P)H:plastoquinone, via FMN and iron-sulfur (Fe-S) centers, to quinones in the photosynthetic chain and possibly in a chloroplast respiratory chain. The immediate electron acceptor for the enzyme in this species is believed to be plastoquinone. Couples the redox reaction to proton translocation, and thus conserves the redox energy in a proton gradient. This Platanus occidentalis (Sycamore) protein is NAD(P)H-quinone oxidoreductase subunit J, chloroplastic.